Consider the following 533-residue polypeptide: Laccase-2 (533 aa).

Positions 1-23 (MFPGARILATLTLALHLLHGAHA) are cleaved as a signal peptide. 3 consecutive Plastocyanin-like domains span residues 25 to 171 (IGPA…LSLY), 173 to 336 (IDNA…LETN), and 382 to 501 (TAPV…FAED). Cu cation is bound by residues His98, His100, His143, and His145. Cystine bridges form between Cys119-Cys516 and Cys151-Cys238. Positions 427, 430, and 432 each coordinate Cu cation. Residue Asn467 is glycosylated (N-linked (GlcNAc...) (high mannose) asparagine). 4 residues coordinate Cu cation: His483, Cys484, His485, and His489.

It belongs to the multicopper oxidase family. The cofactor is Cu cation. N-glycosylated at Asn-467; contains a high-mannose glycan with a varying number of mannose residues.

Its subcellular location is the secreted. The catalysed reaction is 4 hydroquinone + O2 = 4 benzosemiquinone + 2 H2O. Functionally, lignin degradation and detoxification of lignin-derived products. In Pleurotus ostreatus (Oyster mushroom), this protein is Laccase-2 (POX2).